An 81-amino-acid chain; its full sequence is Cytotoxin 8 (81 aa).

The N-terminal stretch at methionine 1–threonine 21 is a signal peptide. 4 cysteine pairs are disulfide-bonded: cysteine 24–cysteine 42, cysteine 35–cysteine 59, cysteine 63–cysteine 74, and cysteine 75–cysteine 80.

The protein belongs to the three-finger toxin family. Short-chain subfamily. Type IA cytotoxin sub-subfamily. Monomer in solution; Homodimer and oligomer in the presence of negatively charged lipids forming a pore with a size ranging between 20 and 30 Angstroms. As to expression, expressed by the venom gland.

Its subcellular location is the secreted. It is found in the target cell membrane. Functionally, shows cytolytic activity on many different cells by forming pore in lipid membranes. In vivo, increases heart rate or kills the animal by cardiac arrest. In addition, it binds to heparin with high affinity, interacts with Kv channel-interacting protein 1 (KCNIP1) in a calcium-independent manner, and binds to integrin alpha-V/beta-3 (ITGAV/ITGB3) with moderate affinity. The protein is Cytotoxin 8 of Naja atra (Chinese cobra).